The primary structure comprises 487 residues: 3-ketoacyl-CoA synthase 17 (487 aa).

2 helical membrane passes run 23–43 and 57–77; these read LITHFFKLMFLPLMAVLFMNV and STGFIFVITLAIVGSIVFFMS. The FAE domain maps to 74 to 363; sequence FFMSRPRSIY…FFATFVAKRL (290 aa). Catalysis depends on residues cysteine 218, histidine 297, histidine 382, histidine 386, histidine 415, and asparagine 419.

Belongs to the thiolase-like superfamily. Chalcone/stilbene synthases family. Expressed in flowers.

Its subcellular location is the membrane. It catalyses the reaction a very-long-chain acyl-CoA + malonyl-CoA + H(+) = a very-long-chain 3-oxoacyl-CoA + CO2 + CoA. The protein operates within lipid metabolism; fatty acid biosynthesis. With respect to regulation, inhibited by K3 herbicides such as alachlor, allidochlor, anilofos, cafenstrole, fentrazamide and flufenacet. Strongly inhibited by metazachlor. Functionally, active on saturated acyl-CoAs up to C22. Mediates the synthesis of VLCFAs from 20 to 26 carbons in length (e.g. C20:1, C20, C24, C26). The protein is 3-ketoacyl-CoA synthase 17 of Arabidopsis thaliana (Mouse-ear cress).